Consider the following 360-residue polypeptide: Sorbitol dehydrogenase (360 aa).

Residue C42 participates in Zn(2+) binding. Y48 is a substrate binding site. Residues H67 and E68 each coordinate Zn(2+). E153 contacts substrate. NAD(+) is bound by residues D201, R206, 277–279 (AGN), and 301–303 (SFR). Substrate-binding residues include R303 and Y304.

This sequence belongs to the zinc-containing alcohol dehydrogenase family. In terms of assembly, homotetramer. Zn(2+) serves as cofactor.

The enzyme catalyses keto-D-fructose + NADH + H(+) = D-sorbitol + NAD(+). Its function is as follows. Polyol dehydrogenase that catalyzes the reversible NAD(+)-dependent oxidation of various sugar alcohols. Is active with D-sorbitol (D-glucitol) as substrate, leading to the C2-oxidized product D-fructose. Suppresses growth arrest induced by a p53 tumor mutant in fission yeast. The polypeptide is Sorbitol dehydrogenase (tms1) (Schizosaccharomyces pombe (strain 972 / ATCC 24843) (Fission yeast)).